Reading from the N-terminus, the 435-residue chain is Putative FBD-associated F-box protein At5g56820 (435 aa).

The 47-residue stretch at Ser-14–Asp-60 folds into the F-box domain. An FBD domain is found at Val-341–Arg-390.

This is Putative FBD-associated F-box protein At5g56820 from Arabidopsis thaliana (Mouse-ear cress).